The sequence spans 207 residues: Ras-related protein Rab-8B (207 aa).

Residues S17, G18, V19, G20, K21, T22, C23, T35, S39, and T40 each contribute to the GTP site. T22 is a Mg(2+) binding site. 2 short sequence motifs (switch) span residues 31–45 (DAFN…GIDF) and 63–80 (DTAG…YYRG). Residues T40 and D63 each coordinate Mg(2+). GTP is bound at residue G66. The residue at position 72 (T72) is a Phosphothreonine. Positions 121, 122, 124, 152, and 153 each coordinate GTP. S180 bears the Phosphoserine mark. Position 204 is a cysteine methyl ester (C204). A lipid anchor (S-geranylgeranyl cysteine) is attached at C204. Positions 205–207 (LLL) are cleaved as a propeptide — removed in mature form.

The protein belongs to the small GTPase superfamily. Rab family. Associated with actin, delta-catenin and alpha and beta tubulins. Interacts with OTOF. Interacts with PEX5R. Interacts with RAB3IP. Interacts with VIM. Interacts with CDH1. Interacts with MICALL2. Interacts with GDI1, GDI2, CHML and CHM; phosphorylation at Thr-72 disrupts these interactions. Interacts with MICAL1. It depends on Mg(2+) as a cofactor. Post-translationally, phosphorylation of Thr-72 in the switch II region by LRRK2 prevents the association of RAB regulatory proteins, including CHM, CHML and RAB GDP dissociation inhibitors GDI1 and GDI2.

It localises to the cell membrane. Its subcellular location is the cytoplasmic vesicle. The protein resides in the phagosome membrane. It is found in the endosome membrane. It carries out the reaction GTP + H2O = GDP + phosphate + H(+). Regulated by guanine nucleotide exchange factors (GEFs) including RAB3IP/RABIN8 which promotes the exchange of bound GDP for free GTP. Regulated by GTPase activating proteins (GAPs) which increase the GTP hydrolysis activity. Inhibited by GDP dissociation inhibitors (GDIs). The small GTPases Rab are key regulators of intracellular membrane trafficking, from the formation of transport vesicles to their fusion with membranes. Rabs cycle between an inactive GDP-bound form and an active GTP-bound form that is able to recruit to membranes different sets of downstream effectors directly responsible for vesicle formation, movement, tethering and fusion. RAB8B may be involved in polarized vesicular trafficking and neurotransmitter release. May participate in cell junction dynamics in Sertoli cells. May also participate in the export of a subset of neosynthesized proteins through a Rab8-Rab10-Rab11-dependent endososomal export route. This is Ras-related protein Rab-8B (RAB8B) from Pongo abelii (Sumatran orangutan).